The following is a 181-amino-acid chain: Proteinase inhibitor A (181 aa).

A signal peptide spans 1-24 (MAASNALLLISGVLLISLAVLCHG). 3 disulfide bridges follow: cysteine 67-cysteine 113, cysteine 134-cysteine 143, and cysteine 136-cysteine 139.

The protein belongs to the protease inhibitor I3 (leguminous Kunitz-type inhibitor) family.

Its subcellular location is the secreted. Its function is as follows. Possesses two reactive sites. Inhibits an equimolar amount of trypsin and chymotrypsin simultaneously, and inhibits kallikrein weakly. This Sagittaria sagittifolia (Arrowhead) protein is Proteinase inhibitor A.